A 188-amino-acid polypeptide reads, in one-letter code: dTTP/UTP pyrophosphatase (188 aa).

Aspartate 67 serves as the catalytic Proton acceptor.

It belongs to the Maf family. YhdE subfamily. A divalent metal cation is required as a cofactor.

It is found in the cytoplasm. It catalyses the reaction dTTP + H2O = dTMP + diphosphate + H(+). The enzyme catalyses UTP + H2O = UMP + diphosphate + H(+). In terms of biological role, nucleoside triphosphate pyrophosphatase that hydrolyzes dTTP and UTP. May have a dual role in cell division arrest and in preventing the incorporation of modified nucleotides into cellular nucleic acids. This Roseobacter denitrificans (strain ATCC 33942 / OCh 114) (Erythrobacter sp. (strain OCh 114)) protein is dTTP/UTP pyrophosphatase.